A 376-amino-acid polypeptide reads, in one-letter code: Aspartate-semialdehyde dehydrogenase (376 aa).

NADP(+) is bound by residues 11–14 (RGMV), 38–39 (TS), and Q74. Residue R103 coordinates phosphate. C136 acts as the Acyl-thioester intermediate in catalysis. Residue Q163 participates in substrate binding. NADP(+) is bound by residues 166 to 167 (SG) and P194. E242 lines the substrate pocket. K245 contributes to the phosphate binding site. R273 provides a ligand contact to substrate. H280 serves as the catalytic Proton acceptor. NADP(+) is bound at residue Q356.

This sequence belongs to the aspartate-semialdehyde dehydrogenase family. Homodimer.

The catalysed reaction is L-aspartate 4-semialdehyde + phosphate + NADP(+) = 4-phospho-L-aspartate + NADPH + H(+). The protein operates within amino-acid biosynthesis; L-lysine biosynthesis via DAP pathway; (S)-tetrahydrodipicolinate from L-aspartate: step 2/4. Its pathway is amino-acid biosynthesis; L-methionine biosynthesis via de novo pathway; L-homoserine from L-aspartate: step 2/3. It functions in the pathway amino-acid biosynthesis; L-threonine biosynthesis; L-threonine from L-aspartate: step 2/5. In terms of biological role, catalyzes the NADPH-dependent formation of L-aspartate-semialdehyde (L-ASA) by the reductive dephosphorylation of L-aspartyl-4-phosphate. The chain is Aspartate-semialdehyde dehydrogenase from Bordetella pertussis (strain Tohama I / ATCC BAA-589 / NCTC 13251).